The chain runs to 259 residues: uncharacterized protein (259 aa).

Glu-46 is a catalytic residue.

It belongs to the PhzF family.

This is an uncharacterized protein from Pseudomonas aeruginosa (strain ATCC 15692 / DSM 22644 / CIP 104116 / JCM 14847 / LMG 12228 / 1C / PRS 101 / PAO1).